The primary structure comprises 171 residues: Large ribosomal subunit protein uL10 (171 aa).

The protein belongs to the universal ribosomal protein uL10 family. Part of the ribosomal stalk of the 50S ribosomal subunit. The N-terminus interacts with L11 and the large rRNA to form the base of the stalk. The C-terminus forms an elongated spine to which L12 dimers bind in a sequential fashion forming a multimeric L10(L12)X complex.

Its function is as follows. Forms part of the ribosomal stalk, playing a central role in the interaction of the ribosome with GTP-bound translation factors. This is Large ribosomal subunit protein uL10 from Hyphomonas neptunium (strain ATCC 15444).